Reading from the N-terminus, the 326-residue chain is DNA repair protein RAD51 homolog 4 (326 aa).

The preferentially binds ssDNA stretch occupies residues 1–83 (MGVLRAGLCP…ELKTSTAILS (83 aa)). An ATP-binding site is contributed by 107–114 (GAPGSGKT).

The protein belongs to the RecA family. RAD51 subfamily. Part of the BCDX2 complex consisting of RAD51B, RAD51C, RAD51D and XRCC2; the complex has a ring-like structure arranged into a flat disc around a central channel. In the absence of DNA, the BCDX2 subcomplex XRCC2:RAD51D formed a multimeric ring structure; in the presence of single-stranded DNA it formed a filamentous structure with the ssDNA. Interacts with SWSAP1 and ZSWIM7; involved in homologous recombination repair. Interacts with BLM; required for stimulation of BLM activity by the BCDX2 subcomplex XRCC2:RAD51D.

The protein resides in the nucleus. Involved in the homologous recombination repair (HRR) pathway of double-stranded DNA breaks arising during DNA replication or induced by DNA-damaging agents. Bind to single-stranded DNA (ssDNA) and has DNA-dependent ATPase activity. Part of the RAD51 paralog protein complex BCDX2 which acts in the BRCA1-BRCA2-dependent HR pathway. Upon DNA damage, BCDX2 acts downstream of BRCA2 recruitment and upstream of RAD51 recruitment. BCDX2 binds predominantly to the intersection of the four duplex arms of the Holliday junction and to junction of replication forks. The BCDX2 complex was originally reported to bind single-stranded DNA, single-stranded gaps in duplex DNA and specifically to nicks in duplex DNA. Involved in telomere maintenance. The BCDX2 subcomplex XRCC2:RAD51D can stimulate Holliday junction resolution by BLM. The protein is DNA repair protein RAD51 homolog 4 (RAD51D) of Bos taurus (Bovine).